We begin with the raw amino-acid sequence, 410 residues long: Mating-type locus allele B3 protein (410 aa).

The interval 1 to 110 (MSRDPKLSLS…ANVVSPGEGC (110 aa)) is variable domain between B alleles. The segment at residues 107–184 (GEGCRNLSED…NARRRSGWSH (78 aa)) is a DNA-binding region (homeobox; TALE-type). The interval 111–410 (RNLSEDLPAY…PFLCLSVAFV (300 aa)) is highly conserved between B alleles. Disordered stretches follow at residues 203 to 224 (AKLS…PSDD) and 278 to 335 (TPKP…TPEL). Polar residues predominate over residues 205 to 219 (LSSSNQSTPPSLTSE). A Nuclear localization signal motif is present at residues 276-308 (KKTPKPGMPRPVTTVAKRHPARKTKPAAKPKSR). The span at 291-307 (AKRHPARKTKPAAKPKS) shows a compositional bias: basic residues. The segment covering 312-335 (PRASTTPSIDSTLDSSKLESTPEL) has biased composition (polar residues). A not essential for B3 function region spans residues 333–410 (PELSMCSTAD…PFLCLSVAFV (78 aa)).

It belongs to the TALE/M-ATYP homeobox family.

It is found in the nucleus. In terms of biological role, the B locus has at least 25 alleles, and any combination of two different B alleles yields a multimeric regulatory protein, that activates genes responsible for the pathogenicity and for the sexual development of the fungus within the corn plant. The polypeptide is Mating-type locus allele B3 protein (Mycosarcoma maydis (Corn smut fungus)).